Consider the following 401-residue polypeptide: Aspartate aminotransferase, mitochondrial (401 aa).

Thr19 carries the post-translational modification Phosphothreonine. Position 30 is an N6-acetyllysine (Lys30). Gly36 contacts substrate. Lys44 is subject to N6-acetyllysine; alternate. Position 44 is an N6-succinyllysine; alternate (Lys44). At Lys53 the chain carries N6-acetyllysine. Lys61 carries the post-translational modification N6-acetyllysine; alternate. Lys61 carries the post-translational modification N6-succinyllysine; alternate. Position 67 is a 3'-nitrotyrosine; alternate (Tyr67). The residue at position 67 (Tyr67) is a Phosphotyrosine; alternate. Residues Lys78, Lys93, and Lys130 each carry the N6-acetyllysine; alternate modification. An N6-succinyllysine; alternate mark is found at Lys78, Lys93, and Lys130. Substrate is bound at residue Trp133. The residue at position 156 (Lys156) is an N6-acetyllysine; alternate. N6-succinyllysine; alternate is present on Lys156. Residue Asn186 participates in substrate binding. An N6-succinyllysine modification is found at Lys198. Lys205 carries the post-translational modification N6-acetyllysine. An N6-acetyllysine; alternate mark is found at Lys250 and Lys267. Position 250 is an N6-(pyridoxal phosphate)lysine; alternate (Lys250). Lys267 carries the N6-succinyllysine; alternate modification. Lys273 bears the N6-acetyllysine mark. N6-acetyllysine; alternate is present on Lys280. Lys280 is modified (N6-succinyllysine; alternate). Arg284 is modified (asymmetric dimethylarginine). Lys309 carries the post-translational modification N6-acetyllysine; alternate. Lys309 carries the post-translational modification N6-succinyllysine; alternate. Lys316 carries the post-translational modification N6-acetyllysine. Lys334 carries the post-translational modification N6-acetyllysine; alternate. The residue at position 334 (Lys334) is an N6-succinyllysine; alternate. N6-acetyllysine is present on residues Lys335 and Lys358. An N6-acetyllysine; alternate mark is found at Lys367 and Lys375. N6-succinyllysine; alternate occurs at positions 367 and 375. Residue Arg378 participates in substrate binding.

Belongs to the class-I pyridoxal-phosphate-dependent aminotransferase family. As to quaternary structure, homodimer. Pyridoxal 5'-phosphate is required as a cofactor.

It localises to the mitochondrion matrix. Its subcellular location is the cell membrane. It catalyses the reaction L-aspartate + 2-oxoglutarate = oxaloacetate + L-glutamate. The catalysed reaction is L-kynurenine + 2-oxoglutarate = kynurenate + L-glutamate + H2O. In terms of biological role, catalyzes the irreversible transamination of the L-tryptophan metabolite L-kynurenine to form kynurenic acid (KA). As a member of the malate-aspartate shuttle, it has a key role in the intracellular NAD(H) redox balance. Is important for metabolite exchange between mitochondria and cytosol, and for amino acid metabolism. Facilitates cellular uptake of long-chain free fatty acids. The chain is Aspartate aminotransferase, mitochondrial (GOT2) from Equus caballus (Horse).